Here is a 764-residue protein sequence, read N- to C-terminus: A-type ATP synthase subunit A (764 aa).

This sequence belongs to the ATPase alpha/beta chains family. In terms of assembly, has multiple subunits with at least A(3), B(3), C, D, E, F, H, I and proteolipid K(x). This protein undergoes a protein self splicing that involves a post-translational excision of the VDE intervening region (intein) followed by peptide ligation.

The protein localises to the cell membrane. It carries out the reaction ATP + H2O + 4 H(+)(in) = ADP + phosphate + 5 H(+)(out). Component of the A-type ATP synthase that produces ATP from ADP in the presence of a proton gradient across the membrane. The A chain is the catalytic subunit. The polypeptide is A-type ATP synthase subunit A (Thermoplasma acidophilum (strain ATCC 25905 / DSM 1728 / JCM 9062 / NBRC 15155 / AMRC-C165)).